Reading from the N-terminus, the 636-residue chain is Phosphomethylpyrimidine synthase (636 aa).

Residues 48–70 (DDTPTDFGGEKNPPVRVYDTSGP) are disordered. Residues Asn-231, Met-260, Tyr-289, His-325, 345-347 (SRG), 386-389 (DGLR), and Glu-425 contribute to the substrate site. His-429 is a binding site for Zn(2+). Position 452 (Tyr-452) interacts with substrate. His-493 is a binding site for Zn(2+). 3 residues coordinate [4Fe-4S] cluster: Cys-573, Cys-576, and Cys-581.

Belongs to the ThiC family. As to quaternary structure, homodimer. [4Fe-4S] cluster is required as a cofactor.

The enzyme catalyses 5-amino-1-(5-phospho-beta-D-ribosyl)imidazole + S-adenosyl-L-methionine = 4-amino-2-methyl-5-(phosphooxymethyl)pyrimidine + CO + 5'-deoxyadenosine + formate + L-methionine + 3 H(+). It functions in the pathway cofactor biosynthesis; thiamine diphosphate biosynthesis. Its function is as follows. Catalyzes the synthesis of the hydroxymethylpyrimidine phosphate (HMP-P) moiety of thiamine from aminoimidazole ribotide (AIR) in a radical S-adenosyl-L-methionine (SAM)-dependent reaction. The protein is Phosphomethylpyrimidine synthase of Cellvibrio japonicus (strain Ueda107) (Pseudomonas fluorescens subsp. cellulosa).